A 565-amino-acid chain; its full sequence is Atlastin-2 (565 aa).

At 1-458 (MVLKKGVKFF…NIFYAARTPA (458 aa)) the chain is on the cytoplasmic side. Residues 73-318 (DLNIVVVSVA…LVPLLLAPEN (246 aa)) form the GB1/RHD3-type G domain. 9 residues coordinate GDP: Arg86, Lys87, Gly88, Lys89, Ser90, Phe91, Gln157, Arg226, and Asp227. Residues Arg86, Lys87, Gly88, Lys89, Ser90, and Phe91 each contribute to the GTP site. Mg(2+) is bound at residue Ser90. Residues Arg226 and Asp227 each coordinate GTP. Positions 238-266 (LEGGKQFLEKRLQVKKNQHEELQNVRKHI) form a coiled coil. Lys252 is subject to N6-methyllysine. Residues Val285 and Asn288 each contribute to the GDP site. Val285 is a binding site for GTP. Positions 356–447 (MLQATAEANN…YANFIKHNDG (92 aa)) are 3HB (three-helix bundle) domain. A linker region spans residues 448–456 (KNIFYAART). The helical transmembrane segment at 459–479 (TLFAVMFAMYIISGLTGFIGL) threads the bilayer. Over 480-481 (NS) the chain is Lumenal. The chain crosses the membrane as a helical span at residues 482–502 (IAVLCNLVMGLALTFLCTWAY). Residues 503-565 (VKYSGEFREI…VSHHARLKTD (63 aa)) are Cytoplasmic-facing. Residues 529–565 (KPLGDNLMEENIRQSVTNSIKAGLTDQVSHHARLKTD) are autoinhibitory domain.

Belongs to the TRAFAC class dynamin-like GTPase superfamily. GB1/RHD3 GTPase family. GB1 subfamily. In terms of assembly, monomeric and homodimeric. The homodimer, transiently formed by two molecules on opposing membranes, is the active form mediating ER membrane fusion. Interacts with REEP5 and RTN3; these proteins are involved in endoplasmic reticulum tubular network organization. Interacts with ZFYVE27; both proteins are involved in endoplasmic reticulum tubular network organization.

The protein localises to the endoplasmic reticulum membrane. The enzyme catalyses GTP + H2O = GDP + phosphate + H(+). Its function is as follows. Atlastin-2 (ATL2) is a membrane-anchored GTPase that mediates the GTP-dependent fusion of endoplasmic reticulum (ER) membranes, maintaining the continuous ER network. It facilitates the formation of three-way junctions where ER tubules intersect. Two atlastin-2 on neighboring ER tubules bind GTP and form loose homodimers through the GB1/RHD3-type G domains and 3HB regions. Upon GTP hydrolysis, the 3HB regions tighten, pulling the membranes together to drive their fusion. After fusion, the homodimer disassembles upon release of inorganic phosphate (Pi). Subsequently, GDP dissociates, resetting the monomers to a conformation ready for a new fusion cycle. This Macaca fascicularis (Crab-eating macaque) protein is Atlastin-2.